The chain runs to 442 residues: D-galactonate dehydratase family member SSBG_02010 (442 aa).

Asp-246 serves as a coordination point for Mg(2+). Residue His-248 coordinates D-arabinonate. Glu-272 and Glu-298 together coordinate Mg(2+). D-arabinonate contacts are provided by Glu-298, Arg-319, His-348, and Glu-375.

It belongs to the mandelate racemase/muconate lactonizing enzyme family. GalD subfamily.

Has no detectable activity with D-mannonate and with a panel of 70 other acid sugars (in vitro), in spite of the conservation of the residues that are expected to be important for catalytic activity and cofactor binding. May have evolved a divergent function. This is D-galactonate dehydratase family member SSBG_02010 from Streptomyces sp. (strain SPB074).